Reading from the N-terminus, the 357-residue chain is Neuronal-specific septin-3 (357 aa).

Residues 1-10 (MSKGLPETRT) are compositionally biased toward basic and acidic residues. The interval 1-29 (MSKGLPETRTDAAMSELVPEPRPKPAVPM) is disordered. Positions 58–330 (TGFDFNIMVV…ETYRAKRLND (273 aa)) constitute a Septin-type G domain. The interval 68–75 (GQSGLGKS) is G1 motif. 68 to 75 (GQSGLGKS) provides a ligand contact to GTP. Ser-91 carries the post-translational modification Phosphoserine. Thr-102 is a binding site for GTP. The tract at residues 125 to 128 (DTPG) is G3 motif. The segment at 207–210 (AKAD) is G4 motif. Residues 208–216 (KADTMTLEE), Gly-264, and Arg-279 contribute to the GTP site.

The protein belongs to the TRAFAC class TrmE-Era-EngA-EngB-Septin-like GTPase superfamily. Septin GTPase family. As to quaternary structure, septins polymerize into heterooligomeric protein complexes that form filaments, and can associate with cellular membranes, actin filaments and microtubules. GTPase activity is required for filament formation. In terms of processing, phosphorylated by PKG on serine residues. Phosphorylated by PKG on Ser-91.

It is found in the cytoplasm. The protein resides in the cytoskeleton. The protein localises to the synapse. Functionally, filament-forming cytoskeletal GTPase. May play a role in cytokinesis (Potential). The polypeptide is Neuronal-specific septin-3 (Bos taurus (Bovine)).